A 589-amino-acid polypeptide reads, in one-letter code: GTPase LSG1-2 (589 aa).

The disordered stretch occupies residues 1-26; it reads MGKSEKTSLGRSLVKHHNHMIQESKD. A CP-type G domain is found at 158–366; it reads WRQLWRVLER…LCDCPGLVFP (209 aa). Positions 176-180 match the DARXP motif motif; it reads DARDP. The tract at residues 206 to 209 is G4; that stretch reads NKAD. Residue 206-209 participates in GTP binding; the sequence is NKAD. The interval 237–239 is G5; that stretch reads AAT. The tract at residues 315–322 is G1; it reads GYPNVGKS. 318-323 provides a ligand contact to GTP; the sequence is NVGKSS. The interval 341-345 is G2; sequence GKTKH. The segment at 359–362 is G3; that stretch reads DCPG. Residue Gly-362 coordinates GTP. Positions 495–509 are enriched in acidic residues; that stretch reads GSESDDSAVGDETEN. Disordered regions lie at residues 495 to 515 and 534 to 589; these read GSESDDSAVGDETENEQVPGI and SKKV…LTMR. Residues 534 to 541 carry the Nuclear localization signal motif; that stretch reads SKKVTAKK. A compositionally biased stretch (basic residues) spans 534–558; that stretch reads SKKVTAKKQTASHKQHKKPQRKKDR. A compositionally biased stretch (polar residues) spans 580–589; the sequence is PANTGPLTMR.

It belongs to the TRAFAC class YlqF/YawG GTPase family. Ubiquitous, with the highest expression in reproductive and strongly dividing tissues.

It localises to the cytoplasm. The protein resides in the nucleus. Functionally, GTPase involved in ribosome biogenesis. Binds to 23S rRNA and associates with 60S pre-ribosomes. Involved in early cotyledon and leaf development. This is GTPase LSG1-2 from Arabidopsis thaliana (Mouse-ear cress).